The primary structure comprises 700 residues: Methionine--tRNA ligase (700 aa).

Residues proline 13–histidine 23 carry the 'HIGH' region motif. The Zn(2+) site is built by cysteine 144, cysteine 147, cysteine 157, and cysteine 160. The 'KMSKS' region signature appears at lysine 341 to serine 345. Lysine 344 is a binding site for ATP. The region spanning aspartate 598–alanine 700 is the tRNA-binding domain.

The protein belongs to the class-I aminoacyl-tRNA synthetase family. MetG type 1 subfamily. Homodimer. Zn(2+) is required as a cofactor.

The protein resides in the cytoplasm. The enzyme catalyses tRNA(Met) + L-methionine + ATP = L-methionyl-tRNA(Met) + AMP + diphosphate. Functionally, is required not only for elongation of protein synthesis but also for the initiation of all mRNA translation through initiator tRNA(fMet) aminoacylation. The chain is Methionine--tRNA ligase from Psychrobacter arcticus (strain DSM 17307 / VKM B-2377 / 273-4).